Here is a 265-residue protein sequence, read N- to C-terminus: Beta-lactamase OXA-48 (265 aa).

A signal peptide spans 1–22 (MRVLALSAVFLVASIIGMPAVA). The active-site Acyl-ester intermediate is the Ser70. A beta-lactam-binding residues include Ser70, Lys73, Ser118, and Arg250. The residue at position 73 (Lys73) is an N6-carboxylysine.

Belongs to the class-D beta-lactamase family. In terms of assembly, monomer. Dimer. Post-translationally, carboxylated on the epsilon-amino group of a lysine, with the resulting carbamate functional group serving as a general base. Probably N-carboxylated at Lys-73 at neutral pH in vivo and undergoes complete N-decarboxylation, at pH 4.1, in vitro.

It catalyses the reaction a beta-lactam + H2O = a substituted beta-amino acid. Inhibited by avibactam, related diazabicyclooctane (DBO) derivatives and by bicyclic boronic acids, via a covalent binding to Ser-70. Inhibited by chloride, bromide and iodide ions. Not inhibited by the beta-lactamase-blocking agents, clavulanic acid or tazobactam. Class D beta-lactamase which confers resistance to the beta-lactam antibiotics, including amoxicillin, and moderate resistance to cephalosporins and carbapenems such as cephalothin and imipenem; in the DH10B strain of E.coli. Acts via hydrolysis of the beta-lactam ring. Has oxacillin-, cephalothin- and imipenem-hydrolyzing activities. This Klebsiella pneumoniae protein is Beta-lactamase OXA-48.